We begin with the raw amino-acid sequence, 106 residues long: Large ribosomal subunit protein uL23 (106 aa).

Belongs to the universal ribosomal protein uL23 family. As to quaternary structure, part of the 50S ribosomal subunit. Contacts protein L29, and trigger factor when it is bound to the ribosome.

One of the early assembly proteins it binds 23S rRNA. One of the proteins that surrounds the polypeptide exit tunnel on the outside of the ribosome. Forms the main docking site for trigger factor binding to the ribosome. This is Large ribosomal subunit protein uL23 from Acinetobacter baylyi (strain ATCC 33305 / BD413 / ADP1).